The chain runs to 588 residues: Lamin-B1 (588 aa).

A compositionally biased stretch (polar residues) spans 1–12 (MATATPVQQQRA). The interval 1–34 (MATATPVQQQRAGSRASAPATPLSPTRLSRLQEK) is disordered. N-acetylalanine is present on alanine 2. Residues 2–35 (ATATPVQQQRAGSRASAPATPLSPTRLSRLQEKE) are head. 2 positions are modified to phosphothreonine: threonine 3 and threonine 5. Omega-N-methylarginine is present on arginine 15. Phosphoserine is present on serine 17. Threonine 21 carries the post-translational modification Phosphothreonine. Serine 24 is subject to Phosphoserine. A Phosphothreonine modification is found at threonine 26. Serine 29 carries the phosphoserine modification. Positions 33–389 (EKEELRELND…KLLEGEEERL (357 aa)) constitute an IF rod domain. The interval 36 to 70 (ELRELNDRLAVYIDKVRSLETENSALQLQVTEREE) is coil 1A. The segment at 71–82 (VRGRELTGLKAL) is linker 1. The interval 83–216 (YETELADARR…EFRKNMYEEE (134 aa)) is coil 1B. A Glycyl lysine isopeptide (Lys-Gly) (interchain with G-Cter in SUMO2) cross-link involves residue lysine 103. Lysine 112 carries the N6-acetyllysine modification. Lysine 124 participates in a covalent cross-link: Glycyl lysine isopeptide (Lys-Gly) (interchain with G-Cter in SUMO2). Serine 127 is modified (phosphoserine). Lysine 146 is covalently cross-linked (Glycyl lysine isopeptide (Lys-Gly) (interchain with G-Cter in SUMO2)). Lysine 158 carries the post-translational modification N6-acetyllysine; alternate. Residue lysine 158 forms a Glycyl lysine isopeptide (Lys-Gly) (interchain with G-Cter in SUMO2); alternate linkage. A Phosphoserine modification is found at serine 159. A Glycyl lysine isopeptide (Lys-Gly) (interchain with G-Cter in SUMO2) cross-link involves residue lysine 182. Phosphoserine occurs at positions 201 and 233. The segment at 217-244 (INETRRKHETRLVEVDSGRQIEYEYKLA) is linker 2. Residues lysine 242 and lysine 262 each participate in a glycyl lysine isopeptide (Lys-Gly) (interchain with G-Cter in SUMO2) cross-link. Residues 245-387 (QALHEMREQH…YRKLLEGEEE (143 aa)) form a coil 2 region. Position 272 is an N6-acetyllysine; alternate (lysine 272). Lysine 272 participates in a covalent cross-link: Glycyl lysine isopeptide (Lys-Gly) (interchain with G-Cter in SUMO2); alternate. A phosphoserine mark is found at serine 279 and serine 303. A Glycyl lysine isopeptide (Lys-Gly) (interchain with G-Cter in SUMO2) cross-link involves residue lysine 313. Lysine 331 bears the N6-acetyllysine; alternate mark. Lysine 331 is covalently cross-linked (Glycyl lysine isopeptide (Lys-Gly) (interchain with G-Cter in SUMO2); alternate). Phosphoserine occurs at positions 376 and 394. Positions 388 to 588 (RLKLSPSPSS…RASNKSCAIM (201 aa)) are tail. The span at 391–410 (LSPSPSSRVTVSRASSSRSV) shows a compositional bias: low complexity. Residues 391 to 433 (LSPSPSSRVTVSRASSSRSVRTTRGKRKRVDVEESEASSSVSI) are disordered. Threonine 400 carries an O-linked (GlcNAc) threonine glycan. The residue at position 414 (arginine 414) is an Omega-N-methylarginine. A Nuclear localization signal motif is present at residues 416–421 (KRKRVD). The 117-residue stretch at 431–547 (VSISHSASAT…EEVAQRSTVF (117 aa)) folds into the LTD domain. Lysine 484 carries the N6-acetyllysine modification. Lysine 533 is covalently cross-linked (Glycyl lysine isopeptide (Lys-Gly) (interchain with G-Cter in SUMO2)). Phosphoserine is present on serine 535. Lysine 548 is covalently cross-linked (Glycyl lysine isopeptide (Lys-Gly) (interchain with G-Cter in SUMO2)). Cysteine 585 carries the cysteine methyl ester modification. Cysteine 585 carries S-farnesyl cysteine lipidation. Residues 586-588 (AIM) constitute a propeptide, removed in mature form.

This sequence belongs to the intermediate filament family. As to quaternary structure, homodimer. Lamin dimers then assemble into dimeric head-to-tail polymers. Ultimately, two head-to-tail polymers assemble laterally into a protofilament with a uniformly shaped rod of 3.5 nm in diameter. Interacts with SPAG4 and SEPT12. Post-translationally, B-type lamins undergo a series of modifications, such as farnesylation and phosphorylation. Increased phosphorylation of the lamins occurs before envelope disintegration and probably plays a role in regulating lamin associations. Phosphorylation plays a key role in lamin organization, subcellular localization and nuclear envelope disintegration. Phosphorylation by CDK1 at Ser-24 and Ser-394 at the onset of mitosis drives lamin disassembly and nuclear envelope breakdown.

It is found in the nucleus lamina. In terms of biological role, lamins are intermediate filament proteins that assemble into a filamentous meshwork, and which constitute the major components of the nuclear lamina, a fibrous layer on the nucleoplasmic side of the inner nuclear membrane. Lamins provide a framework for the nuclear envelope, bridging the nuclear envelope and chromatin, thereby playing an important role in nuclear assembly, chromatin organization, nuclear membrane and telomere dynamics. The structural integrity of the lamina is strictly controlled by the cell cycle, as seen by the disintegration and formation of the nuclear envelope in prophase and telophase, respectively. The chain is Lamin-B1 (Lmnb1) from Mus musculus (Mouse).